Here is a 964-residue protein sequence, read N- to C-terminus: Translation initiation factor IF-2 (964 aa).

The segment at 49–357 (QIGSAEPADD…QEFDEMQAPL (309 aa)) is disordered. Residues 62–85 (AKPAARKSQTSSKKTSKETTTAKP) show a composition bias toward low complexity. The span at 86 to 102 (APGPKPGPGPKPTPGPR) shows a compositional bias: pro residues. Positions 103-117 (PGSSSGPKPGRSSAA) are enriched in low complexity. A compositionally biased stretch (pro residues) spans 159–169 (PHAPAPKPKPG). Composition is skewed to low complexity over residues 190-212 (GLPSAARPGPRPGAGRRTGAPRP) and 242-251 (GQGERMPRPG). 2 stretches are compositionally biased toward gly residues: residues 252-261 (GSQGSRGGSG) and 284-334 (GRGG…GRGG). The segment covering 335 to 346 (GGRRGRKSRKQR) has biased composition (basic residues). One can recognise a tr-type G domain in the interval 458-629 (ARPPVVTVMG…AIVLTADAAL (172 aa)). The segment at 467–474 (GHVDHGKT) is G1. 467–474 (GHVDHGKT) lines the GTP pocket. The segment at 492–496 (GITQA) is G2. Positions 517-520 (DTPG) are G3. Residues 517–521 (DTPGH) and 571–574 (NKID) contribute to the GTP site. The tract at residues 571–574 (NKID) is G4. Residues 607–609 (SAR) form a G5 region.

It belongs to the TRAFAC class translation factor GTPase superfamily. Classic translation factor GTPase family. IF-2 subfamily.

The protein localises to the cytoplasm. In terms of biological role, one of the essential components for the initiation of protein synthesis. Protects formylmethionyl-tRNA from spontaneous hydrolysis and promotes its binding to the 30S ribosomal subunits. Also involved in the hydrolysis of GTP during the formation of the 70S ribosomal complex. The protein is Translation initiation factor IF-2 of Cutibacterium acnes (strain DSM 16379 / KPA171202) (Propionibacterium acnes).